The following is a 530-amino-acid chain: Autoinducer-2 kinase (530 aa).

The protein belongs to the FGGY kinase family.

It is found in the cytoplasm. The catalysed reaction is (S)-4,5-dihydroxypentane-2,3-dione + ATP = (2S)-2-hydroxy-3,4-dioxopentyl phosphate + ADP + H(+). In terms of biological role, catalyzes the phosphorylation of autoinducer-2 (AI-2) to phospho-AI-2, which subsequently inactivates the transcriptional regulator LsrR and leads to the transcription of the lsr operon. Phosphorylates the ring-open form of (S)-4,5-dihydroxypentane-2,3-dione (DPD), which is the precursor to all AI-2 signaling molecules, at the C5 position. In Escherichia coli O139:H28 (strain E24377A / ETEC), this protein is Autoinducer-2 kinase.